A 515-amino-acid chain; its full sequence is Maturase K (515 aa).

This sequence belongs to the intron maturase 2 family. MatK subfamily.

The protein resides in the plastid. The protein localises to the chloroplast. Functionally, usually encoded in the trnK tRNA gene intron. Probably assists in splicing its own and other chloroplast group II introns. In Pinus pinea (Italian stone pine), this protein is Maturase K.